Consider the following 63-residue polypeptide: Small ribosomal subunit protein eS31 (63 aa).

4 residues coordinate Zn(2+): cysteine 34, cysteine 37, cysteine 53, and cysteine 56. A C4-type zinc finger spans residues 34-56 (CPKCGSVMAFHREPVPRWHCGKC).

It belongs to the eukaryotic ribosomal protein eS31 family. In terms of assembly, part of the 30S ribosomal subunit. Requires Zn(2+) as cofactor.

In Pyrobaculum neutrophilum (strain DSM 2338 / JCM 9278 / NBRC 100436 / V24Sta) (Thermoproteus neutrophilus), this protein is Small ribosomal subunit protein eS31.